The sequence spans 231 residues: Ribose-5-phosphate isomerase A (231 aa).

Substrate contacts are provided by residues 28 to 31 (TGST), 83 to 86 (DGAD), and 96 to 99 (KGGG). E105 serves as the catalytic Proton acceptor. K123 contributes to the substrate binding site.

Belongs to the ribose 5-phosphate isomerase family. As to quaternary structure, homodimer.

The catalysed reaction is aldehydo-D-ribose 5-phosphate = D-ribulose 5-phosphate. It participates in carbohydrate degradation; pentose phosphate pathway; D-ribose 5-phosphate from D-ribulose 5-phosphate (non-oxidative stage): step 1/1. In terms of biological role, catalyzes the reversible conversion of ribose-5-phosphate to ribulose 5-phosphate. The protein is Ribose-5-phosphate isomerase A of Agrobacterium fabrum (strain C58 / ATCC 33970) (Agrobacterium tumefaciens (strain C58)).